Consider the following 126-residue polypeptide: Aspartate 1-decarboxylase (126 aa).

S25 acts as the Schiff-base intermediate with substrate; via pyruvic acid in catalysis. Position 25 is a pyruvic acid (Ser) (S25). T57 is a binding site for substrate. Catalysis depends on Y58, which acts as the Proton donor. Residue 73–75 (GGA) participates in substrate binding.

The protein belongs to the PanD family. As to quaternary structure, heterooctamer of four alpha and four beta subunits. Pyruvate serves as cofactor. Post-translationally, is synthesized initially as an inactive proenzyme, which is activated by self-cleavage at a specific serine bond to produce a beta-subunit with a hydroxyl group at its C-terminus and an alpha-subunit with a pyruvoyl group at its N-terminus.

It is found in the cytoplasm. It carries out the reaction L-aspartate + H(+) = beta-alanine + CO2. Its pathway is cofactor biosynthesis; (R)-pantothenate biosynthesis; beta-alanine from L-aspartate: step 1/1. Catalyzes the pyruvoyl-dependent decarboxylation of aspartate to produce beta-alanine. The polypeptide is Aspartate 1-decarboxylase (Acinetobacter baylyi (strain ATCC 33305 / BD413 / ADP1)).